A 350-amino-acid chain; its full sequence is Hydroxymethylglutaryl-CoA synthase (350 aa).

The Proton donor/acceptor role is filled by Glu83. Cys115 serves as the catalytic Acyl-thioester intermediate. Residues Cys115 and Thr156 each coordinate (3S)-3-hydroxy-3-methylglutaryl-CoA. Arg204 is a CoA binding site. Residues Thr206 and His239 each contribute to the (3S)-3-hydroxy-3-methylglutaryl-CoA site. The active-site Proton donor/acceptor is His239. Residue Lys244 participates in CoA binding. The (3S)-3-hydroxy-3-methylglutaryl-CoA site is built by Asn271 and Ser301.

It belongs to the thiolase-like superfamily. Archaeal HMG-CoA synthase family. As to quaternary structure, interacts with acetoacetyl-CoA thiolase that catalyzes the precedent step in the pathway and with a DUF35 protein. The acetoacetyl-CoA thiolase/HMG-CoA synthase complex channels the intermediate via a fused CoA-binding site, which allows for efficient coupling of the endergonic thiolase reaction with the exergonic HMGCS reaction.

The enzyme catalyses acetoacetyl-CoA + acetyl-CoA + H2O = (3S)-3-hydroxy-3-methylglutaryl-CoA + CoA + H(+). Its pathway is metabolic intermediate biosynthesis; (R)-mevalonate biosynthesis; (R)-mevalonate from acetyl-CoA: step 2/3. In terms of biological role, catalyzes the condensation of acetyl-CoA with acetoacetyl-CoA to form 3-hydroxy-3-methylglutaryl-CoA (HMG-CoA). Functions in the mevalonate (MVA) pathway leading to isopentenyl diphosphate (IPP), a key precursor for the biosynthesis of isoprenoid compounds that are building blocks of archaeal membrane lipids. This is Hydroxymethylglutaryl-CoA synthase from Thermococcus onnurineus (strain NA1).